We begin with the raw amino-acid sequence, 119 residues long: Ribonuclease P protein component (119 aa).

It belongs to the RnpA family. Consists of a catalytic RNA component (M1 or rnpB) and a protein subunit.

It catalyses the reaction Endonucleolytic cleavage of RNA, removing 5'-extranucleotides from tRNA precursor.. Functionally, RNaseP catalyzes the removal of the 5'-leader sequence from pre-tRNA to produce the mature 5'-terminus. It can also cleave other RNA substrates such as 4.5S RNA. The protein component plays an auxiliary but essential role in vivo by binding to the 5'-leader sequence and broadening the substrate specificity of the ribozyme. This Streptococcus pyogenes serotype M1 protein is Ribonuclease P protein component.